Consider the following 205-residue polypeptide: uncharacterized protein (205 aa).

The HTH tetR-type domain maps to 11-71; it reads KTRRALVDAA…EMVDEAGLML (61 aa).

This is an uncharacterized protein from Haemophilus influenzae (strain ATCC 51907 / DSM 11121 / KW20 / Rd).